The following is a 376-amino-acid chain: Glutamate 5-kinase (376 aa).

Lys15 serves as a coordination point for ATP. Substrate contacts are provided by Ser56, Asp143, and Asn155. 175–176 (SD) serves as a coordination point for ATP. One can recognise a PUA domain in the interval 281 to 358 (KGTLTIDAGA…PDVMMILGIT (78 aa)).

The protein belongs to the glutamate 5-kinase family.

Its subcellular location is the cytoplasm. It catalyses the reaction L-glutamate + ATP = L-glutamyl 5-phosphate + ADP. Its pathway is amino-acid biosynthesis; L-proline biosynthesis; L-glutamate 5-semialdehyde from L-glutamate: step 1/2. Its function is as follows. Catalyzes the transfer of a phosphate group to glutamate to form L-glutamate 5-phosphate. This is Glutamate 5-kinase from Rhodopseudomonas palustris (strain TIE-1).